We begin with the raw amino-acid sequence, 346 residues long: tRNA N6-adenosine threonylcarbamoyltransferase (346 aa).

The Fe cation site is built by histidine 111 and histidine 115. Substrate is bound by residues 134 to 138 (LVSGG), aspartate 167, glycine 180, and asparagine 279. Aspartate 307 is a Fe cation binding site.

This sequence belongs to the KAE1 / TsaD family. Fe(2+) serves as cofactor.

It localises to the cytoplasm. The enzyme catalyses L-threonylcarbamoyladenylate + adenosine(37) in tRNA = N(6)-L-threonylcarbamoyladenosine(37) in tRNA + AMP + H(+). Required for the formation of a threonylcarbamoyl group on adenosine at position 37 (t(6)A37) in tRNAs that read codons beginning with adenine. Is involved in the transfer of the threonylcarbamoyl moiety of threonylcarbamoyl-AMP (TC-AMP) to the N6 group of A37, together with TsaE and TsaB. TsaD likely plays a direct catalytic role in this reaction. This is tRNA N6-adenosine threonylcarbamoyltransferase from Burkholderia vietnamiensis (strain G4 / LMG 22486) (Burkholderia cepacia (strain R1808)).